Consider the following 317-residue polypeptide: Retinol dehydrogenase 7 (317 aa).

33–57 (FITGCDSGFGNLLARQLDRRGMRVL) lines the NADP(+) pocket. Ser164 lines the substrate pocket. The active-site Proton acceptor is the Tyr176.

This sequence belongs to the short-chain dehydrogenases/reductases (SDR) family.

It is found in the microsome. It localises to the endoplasmic reticulum. It catalyses the reaction all-trans-retinol--[retinol-binding protein] + NAD(+) = all-trans-retinal--[retinol-binding protein] + NADH + H(+). Its pathway is cofactor metabolism; retinol metabolism. Its function is as follows. Acts on retinol bound on cellular retinol-binding protein (CRBP). The chain is Retinol dehydrogenase 7 from Rattus norvegicus (Rat).